Here is a 79-residue protein sequence, read N- to C-terminus: ATP synthase subunit c (79 aa).

2 helical membrane passes run 10-30 and 52-72; these read IAGA…IGVL and FFIV…LAMY.

Belongs to the ATPase C chain family. As to quaternary structure, F-type ATPases have 2 components, F(1) - the catalytic core - and F(0) - the membrane proton channel. F(1) has five subunits: alpha(3), beta(3), gamma(1), delta(1), epsilon(1). F(0) has three main subunits: a(1), b(2) and c(10-14). The alpha and beta chains form an alternating ring which encloses part of the gamma chain. F(1) is attached to F(0) by a central stalk formed by the gamma and epsilon chains, while a peripheral stalk is formed by the delta and b chains.

It is found in the cell inner membrane. In terms of biological role, f(1)F(0) ATP synthase produces ATP from ADP in the presence of a proton or sodium gradient. F-type ATPases consist of two structural domains, F(1) containing the extramembraneous catalytic core and F(0) containing the membrane proton channel, linked together by a central stalk and a peripheral stalk. During catalysis, ATP synthesis in the catalytic domain of F(1) is coupled via a rotary mechanism of the central stalk subunits to proton translocation. Functionally, key component of the F(0) channel; it plays a direct role in translocation across the membrane. A homomeric c-ring of between 10-14 subunits forms the central stalk rotor element with the F(1) delta and epsilon subunits. The sequence is that of ATP synthase subunit c from Thiobacillus denitrificans (strain ATCC 25259 / T1).